The chain runs to 476 residues: Bifunctional protein HldE (476 aa).

The tract at residues 1–318 is ribokinase; the sequence is MAQYSAEFKQ…ENAIHARPET (318 aa). 195-198 provides a ligand contact to ATP; that stretch reads NMSE. Aspartate 264 is a catalytic residue. Positions 344-476 are cytidylyltransferase; sequence MTNGCFDILH…VIEKIKLLKD (133 aa).

This sequence in the N-terminal section; belongs to the carbohydrate kinase PfkB family. In the C-terminal section; belongs to the cytidylyltransferase family. In terms of assembly, homodimer.

It catalyses the reaction D-glycero-beta-D-manno-heptose 7-phosphate + ATP = D-glycero-beta-D-manno-heptose 1,7-bisphosphate + ADP + H(+). It carries out the reaction D-glycero-beta-D-manno-heptose 1-phosphate + ATP + H(+) = ADP-D-glycero-beta-D-manno-heptose + diphosphate. The protein operates within nucleotide-sugar biosynthesis; ADP-L-glycero-beta-D-manno-heptose biosynthesis; ADP-L-glycero-beta-D-manno-heptose from D-glycero-beta-D-manno-heptose 7-phosphate: step 1/4. It functions in the pathway nucleotide-sugar biosynthesis; ADP-L-glycero-beta-D-manno-heptose biosynthesis; ADP-L-glycero-beta-D-manno-heptose from D-glycero-beta-D-manno-heptose 7-phosphate: step 3/4. Functionally, catalyzes the phosphorylation of D-glycero-D-manno-heptose 7-phosphate at the C-1 position to selectively form D-glycero-beta-D-manno-heptose-1,7-bisphosphate. Its function is as follows. Catalyzes the ADP transfer from ATP to D-glycero-beta-D-manno-heptose 1-phosphate, yielding ADP-D-glycero-beta-D-manno-heptose. This chain is Bifunctional protein HldE, found in Haemophilus influenzae (strain 86-028NP).